The chain runs to 500 residues: Tyrosine decarboxylase 2 (500 aa).

2 consecutive repeat copies span residues 65–122 (EDIR…TELE) and 125–176 (VLDW…GKRS). The tract at residues 65–176 (EDIRQKIVPG…KFLNRFGKRS (112 aa)) is 2 X approximate tandem repeats. Serine 89 lines the substrate pocket. Pyridoxal 5'-phosphate contacts are provided by alanine 153 and serine 154. Histidine 189 provides a ligand contact to substrate. Pyridoxal 5'-phosphate is bound by residues threonine 248 and asparagine 302. Lysine 305 carries the N6-(pyridoxal phosphate)lysine modification.

The protein belongs to the group II decarboxylase family. It depends on pyridoxal 5'-phosphate as a cofactor. In terms of tissue distribution, mostly expressed in bulbs, and, to a lower extent, in stems, roots, leaves and flowers.

It catalyses the reaction L-tyrosine + H(+) = tyramine + CO2. It functions in the pathway alkaloid biosynthesis. Catalyzes the decarboxylation of L-tyrosine to tyramine, which is converted to norbelladine, a precursor to all Amaryllidaceae alkaloids such as galanthamine, lycorine and haemanthamine, and including haemanthamine- and crinamine-type alkaloids, promising anticancer agents. The sequence is that of Tyrosine decarboxylase 2 from Narcissus pseudonarcissus (Daffodil).